The following is a 420-amino-acid chain: Beta-arrestin-2 (420 aa).

Tyrosine 48 carries the post-translational modification Phosphotyrosine. Hydroxyproline; by PHD2 is present on residues proline 176 and proline 181. An interaction with TRAF6 region spans residues 240-409 (ADICLFSTAQ…EDFARLRLKG (170 aa)). Phosphoserine is present on serine 360. The tract at residues 374–420 (PETDAPVDTNLIEFETNYATDDDIVFEDFARLRLKGLKDEDYDDQFC) is interaction with AP2B1. Residue threonine 393 is modified to Phosphothreonine. The [DE]-X(1,2)-F-X-X-[FL]-X-X-X-R motif motif lies at 396–406 (DIVFEDFARLR).

It belongs to the arrestin family. In terms of assembly, homooligomer; the self-association is mediated by InsP6-binding. Heterooligomer with ARRB1; the association is mediated by InsP6-binding. Interacts with ADRB2 and CHRM2. Interacts with PDE4A. Interacts with PDE4D. Interacts with MAPK10, MAPK1 and MAPK3. Interacts with DRD2. Interacts with FSHR. Interacts with CLTC. Interacts with HTR2C. Interacts with CRR5. Interacts with CXCR4. Interacts with SRC. Interacts with DUSP16; the interaction is interrupted by stimulation of AGTR1 and activation of MAPK10. Interacts with CHUK; the interaction is enhanced stimulation of ADRB2. Interacts with RELA. Interacts with MDM2; the interaction is enhanced by activation of GPCRs. Interacts with SLC9A5. Interacts with TRAF6. Interacts with IGF1R. Interacts with ENG. Interacts with KIR2DL1, KIR2DL3 and KIR2DL4. Interacts with LDLR. Interacts with AP2B1. Interacts with C5AR1. Interacts with RAF1. Interacts with MAP2K1. Interacts with MAPK1. Interacts with MAPK10; the interaction enhances MAPK10 activation by MAP3K5. Interacts with MAP2K4; the interaction is enhanced by presence of MAP3K5 and MAPK10. Interacts with MAP3K5. Interacts with AKT1. Interacts with IKBKB and MAP3K14. Interacts with SMO (activated). Interacts with GSK3A and GSK3B. Associates with protein phosphatase 2A (PP2A). Interacts with CXCR4; the interaction is dependent on C-terminal phosphorylation of CXCR4 and allows activation of MAPK1 and MAPK3. Interacts with GPR143. Interacts with HCK and CXCR1 (phosphorylated). Interacts with ACKR3 and ACKR4. Interacts with ARRDC1; the interaction is direct. Interacts with GPR61, GPR62 and GPR135. Interacts (via NACHT and LRR domains) with NLRP3; this interaction is direct and inducible by omega-3 polyunsaturated fatty acids (PUFAs). Interacts with FFAR4 (via C-terminus); this interaction is stimulated by long-chain fatty acids (LCFAs). Interacts with GPR35. Interacts with GPR84. Interacts with TIGIT; this interaction inhibits the NF-kappa-B pathway. Interacts with TGFBR3. In terms of processing, phosphorylated at Thr-382 in the cytoplasm; probably dephosphorylated at the plasma membrane. The phosphorylation does not regulate internalization and recycling of ADRB2, interaction with clathrin or AP2B1. Post-translationally, the ubiquitination status appears to regulate the formation and trafficking of beta-arrestin-GPCR complexes and signaling. Ubiquitination appears to occur GPCR-specific. Ubiquitinated by MDM2; the ubiquitination is required for rapid internalization of ADRB2. Deubiquitinated by USP33; the deubiquitination leads to a dissociation of the beta-arrestin-GPCR complex. Stimulation of a class A GPCR, such as ADRB2, induces transient ubiquitination and subsequently promotes association with USP33. Stimulation of a class B GPCR promotes a sustained ubiquitination. Deubiquitinated by USP20; allowing USP20 to deubiquitinate TRAF6 leading to inhibition of NF-kappa-B signaling. Hydroxylation by PHD2 modulates the rate of internalization by slowing down recruitment to the plasma membrane and inhibiting subsequent co-internalization with class A receptors. Found in a variety of tissues. The short isoform is the most abundant form in all tissues.

It is found in the cytoplasm. Its subcellular location is the nucleus. The protein resides in the cell membrane. It localises to the membrane. The protein localises to the clathrin-coated pit. It is found in the cytoplasmic vesicle. Functionally, functions in regulating agonist-mediated G-protein coupled receptor (GPCR) signaling by mediating both receptor desensitization and resensitization processes. During homologous desensitization, beta-arrestins bind to the GPRK-phosphorylated receptor and sterically preclude its coupling to the cognate G-protein; the binding appears to require additional receptor determinants exposed only in the active receptor conformation. The beta-arrestins target many receptors for internalization by acting as endocytic adapters (CLASPs, clathrin-associated sorting proteins) and recruiting the GPRCs to the adapter protein 2 complex 2 (AP-2) in clathrin-coated pits (CCPs). However, the extent of beta-arrestin involvement appears to vary significantly depending on the receptor, agonist and cell type. Internalized arrestin-receptor complexes traffic to intracellular endosomes, where they remain uncoupled from G-proteins. Two different modes of arrestin-mediated internalization occur. Class A receptors, like ADRB2, OPRM1, ENDRA, D1AR and ADRA1B dissociate from beta-arrestin at or near the plasma membrane and undergo rapid recycling. Class B receptors, like AVPR2, AGTR1, NTSR1, TRHR and TACR1 internalize as a complex with arrestin and traffic with it to endosomal vesicles, presumably as desensitized receptors, for extended periods of time. Receptor resensitization then requires that receptor-bound arrestin is removed so that the receptor can be dephosphorylated and returned to the plasma membrane. Mediates endocytosis of CCR7 following ligation of CCL19 but not CCL21. Involved in internalization of P2RY1, P2RY4, P2RY6 and P2RY11 and ATP-stimulated internalization of P2RY2. Involved in phosphorylation-dependent internalization of OPRD1 and subsequent recycling or degradation. Involved in ubiquitination of IGF1R. Beta-arrestins function as multivalent adapter proteins that can switch the GPCR from a G-protein signaling mode that transmits short-lived signals from the plasma membrane via small molecule second messengers and ion channels to a beta-arrestin signaling mode that transmits a distinct set of signals that are initiated as the receptor internalizes and transits the intracellular compartment. Acts as a signaling scaffold for MAPK pathways such as MAPK1/3 (ERK1/2) and MAPK10 (JNK3). ERK1/2 and JNK3 activated by the beta-arrestin scaffold are largely excluded from the nucleus and confined to cytoplasmic locations such as endocytic vesicles, also called beta-arrestin signalosomes. Acts as a signaling scaffold for the AKT1 pathway. GPCRs for which the beta-arrestin-mediated signaling relies on both ARRB1 and ARRB2 (codependent regulation) include ADRB2, F2RL1 and PTH1R. For some GPCRs the beta-arrestin-mediated signaling relies on either ARRB1 or ARRB2 and is inhibited by the other respective beta-arrestin form (reciprocal regulation). Increases ERK1/2 signaling in AGTR1- and AVPR2-mediated activation (reciprocal regulation). Involved in CCR7-mediated ERK1/2 signaling involving ligand CCL19. Is involved in type-1A angiotensin II receptor/AGTR1-mediated ERK activity. Is involved in type-1A angiotensin II receptor/AGTR1-mediated MAPK10 activity. Is involved in dopamine-stimulated AKT1 activity in the striatum by disrupting the association of AKT1 with its negative regulator PP2A. Involved in AGTR1-mediated chemotaxis. Appears to function as signaling scaffold involved in regulation of MIP-1-beta-stimulated CCR5-dependent chemotaxis. Involved in attenuation of NF-kappa-B-dependent transcription in response to GPCR or cytokine stimulation by interacting with and stabilizing CHUK. Suppresses UV-induced NF-kappa-B-dependent activation by interacting with CHUK. The function is promoted by stimulation of ADRB2 and dephosphorylation of ARRB2. Involved in p53/TP53-mediated apoptosis by regulating MDM2 and reducing the MDM2-mediated degradation of p53/TP53. May serve as nuclear messenger for GPCRs. Upon stimulation of OR1D2, may be involved in regulation of gene expression during the early processes of fertilization. Also involved in regulation of receptors other than GPCRs. Involved in endocytosis of TGFBR2 and TGFBR3 and down-regulates TGF-beta signaling such as NF-kappa-B activation. Involved in endocytosis of low-density lipoprotein receptor/LDLR. Involved in endocytosis of smoothened homolog/Smo, which also requires GRK2. Involved in endocytosis of SLC9A5. Involved in endocytosis of ENG and subsequent TGF-beta-mediated ERK activation and migration of epithelial cells. Involved in Toll-like receptor and IL-1 receptor signaling through the interaction with TRAF6 which prevents TRAF6 autoubiquitination and oligomerization required for activation of NF-kappa-B and JUN. Involved in insulin resistance by acting as insulin-induced signaling scaffold for SRC, AKT1 and INSR. Involved in regulation of inhibitory signaling of natural killer cells by recruiting PTPN6 and PTPN11 to KIR2DL1. Involved in IL8-mediated granule release in neutrophils. Involved in the internalization of the atypical chemokine receptor ACKR3. Acts as an adapter protein coupling FFAR4 receptor to specific downstream signaling pathways, as well as mediating receptor endocytosis. During the activation step of NLRP3 inflammasome, directly associates with NLRP3 leading to inhibition of pro-inflammatory cytokine release and inhibition of inflammation. In Bos taurus (Bovine), this protein is Beta-arrestin-2 (ARRB2).